Reading from the N-terminus, the 93-residue chain is uncharacterized protein (93 aa).

Belongs to the BolA/IbaG family.

This is an uncharacterized protein from Sinorhizobium sp.